The following is a 376-amino-acid chain: Chaperone protein DnaJ (376 aa).

The J domain maps to 5-70; sequence DFYETLGVAK…QKRAAYDRYG (66 aa). The segment at 137–215 adopts a CR-type zinc-finger fold; the sequence is GKTAQIRVPT…CHGQGRVTEE (79 aa). Cys-150, Cys-153, Cys-167, Cys-170, Cys-189, Cys-192, Cys-203, and Cys-206 together coordinate Zn(2+). 4 CXXCXGXG motif repeats span residues 150 to 157, 167 to 174, 189 to 196, and 203 to 210; these read CDVCSGSG, CGTCQGSG, CPTCHGRG, and CPKCHGQG.

This sequence belongs to the DnaJ family. As to quaternary structure, homodimer. It depends on Zn(2+) as a cofactor.

Its subcellular location is the cytoplasm. Participates actively in the response to hyperosmotic and heat shock by preventing the aggregation of stress-denatured proteins and by disaggregating proteins, also in an autonomous, DnaK-independent fashion. Unfolded proteins bind initially to DnaJ; upon interaction with the DnaJ-bound protein, DnaK hydrolyzes its bound ATP, resulting in the formation of a stable complex. GrpE releases ADP from DnaK; ATP binding to DnaK triggers the release of the substrate protein, thus completing the reaction cycle. Several rounds of ATP-dependent interactions between DnaJ, DnaK and GrpE are required for fully efficient folding. Also involved, together with DnaK and GrpE, in the DNA replication of plasmids through activation of initiation proteins. The sequence is that of Chaperone protein DnaJ from Rhizobium leguminosarum bv. trifolii (strain WSM2304).